The primary structure comprises 469 residues: DNA polymerase delta subunit 2 (469 aa).

Met-1 is modified (N-acetylmethionine). Ser-257 carries the post-translational modification Phosphoserine.

Belongs to the DNA polymerase delta/II small subunit family. Component of both the DNA polymerase delta and DNA polymerase zeta complexes. Component of the tetrameric DNA polymerase delta complex (Pol-delta4), which consists of POLD1/p125, POLD2/p50, POLD3/p66/p68 and POLD4/p12, with POLD1 bearing DNA polymerase and 3' to 5' proofreading exonuclease activities. Within Pol-delta4, directly interacts with POLD1, POLD3 and POLD4. Following stress caused by DNA damaging agents or by replication stress, POLD4 is degraded and Pol-delta4 is converted into a trimeric form of the complex (Pol-delta3), which consists of POLD1, POLD2 and POLD3. Pol-delta3 is the major form occurring at S phase replication sites, as well as DNA damage sites. Also observed as a dimeric complex with POLD2 (Pol-delta2 complex). Pol-delta2 is relatively insensitive to the PCNA stimulation (2-5-fold) compared to Pol-delta4 that is stimulated by over 50-fold. Contrary to the other components of Pol-delta4, does not directly interact with PCNA. As POLD1 and POLD4, directly interacts with WRNIP1; this interaction stimulates DNA polymerase delta-mediated DNA synthesis, independently of the presence of PCNA. This stimulation may be due predominantly to an increase of initiation frequency and also to increased processivity. Directly interacts with POLDIP2 and POLDIP3. Directly interacts with KCTD13/PDIP1; in the presence of PCNA, this interaction may stimulate DNA polymerase activity. Component of the tetrameric Pol-zeta complex (Pol-zeta4), which consists of REV3L, MAD2L2, POLD2 and POLD3, with REV3L bearing DNA polymerase catalytic activity. Interacts with KCTD10.

The protein resides in the nucleus. Functionally, accessory component of both the DNA polymerase delta complex and the DNA polymerase zeta complex. As a component of the trimeric and tetrameric DNA polymerase delta complexes (Pol-delta3 and Pol-delta4, respectively), plays a role in high fidelity genome replication, including in lagging strand synthesis, and repair. Pol-delta3 and Pol-delta4 are characterized by the absence or the presence of POLD4. They exhibit differences in catalytic activity. Most notably, Pol-delta3 shows higher proofreading activity than Pol-delta4. Although both Pol-delta3 and Pol-delta4 process Okazaki fragments in vitro, Pol-delta3 may also be better suited to fulfill this task, exhibiting near-absence of strand displacement activity compared to Pol-delta4 and stalling on encounter with the 5'-blocking oligonucleotides. Pol-delta3 idling process may avoid the formation of a gap, while maintaining a nick that can be readily ligated. Along with DNA polymerase kappa, DNA polymerase delta carries out approximately half of nucleotide excision repair (NER) synthesis following UV irradiation. Under conditions of DNA replication stress, required for the repair of broken replication forks through break-induced replication (BIR). Involved in the translesion synthesis (TLS) of templates carrying O6-methylguanine or abasic sites performed by Pol-delta4, independently of DNA polymerase zeta (REV3L) or eta (POLH). Facilitates abasic site bypass by DNA polymerase delta by promoting extension from the nucleotide inserted opposite the lesion. Also involved in TLS as a component of the DNA polymerase zeta complex. Along with POLD3, dramatically increases the efficiency and processivity of DNA synthesis of the DNA polymerase zeta complex compared to the minimal zeta complex, consisting of only REV3L and REV7. The polypeptide is DNA polymerase delta subunit 2 (Pold2) (Mus musculus (Mouse)).